The sequence spans 349 residues: Magnesium-protoporphyrin IX monomethyl ester [oxidative] cyclase (349 aa).

Low complexity predominate over residues 1 to 10; it reads MTATTATAPT. Positions 1–23 are disordered; that stretch reads MTATTATAPTMRGGGRNELPPHL.

Belongs to the AcsF family. The cofactor is Fe cation.

The enzyme catalyses Mg-protoporphyrin IX 13-monomethyl ester + 3 NADPH + 3 O2 + 2 H(+) = 3,8-divinyl protochlorophyllide a + 3 NADP(+) + 5 H2O. The protein operates within porphyrin-containing compound metabolism; chlorophyll biosynthesis (light-independent). Its function is as follows. Catalyzes the formation of the isocyclic ring in chlorophyll biosynthesis. Mediates the cyclase reaction, which results in the formation of divinylprotochlorophyllide (Pchlide) characteristic of all chlorophylls from magnesium-protoporphyrin IX 13-monomethyl ester (MgPMME). This is Magnesium-protoporphyrin IX monomethyl ester [oxidative] cyclase from Prochlorococcus marinus (strain MIT 9313).